The chain runs to 232 residues: Orotidine 5'-phosphate decarboxylase (232 aa).

Residues Asp11, Lys33, 60–69 (DLKFHDIPNT), Thr120, Arg181, Gln190, Gly210, and Arg211 each bind substrate. The Proton donor role is filled by Lys62.

It belongs to the OMP decarboxylase family. Type 1 subfamily. As to quaternary structure, homodimer.

The catalysed reaction is orotidine 5'-phosphate + H(+) = UMP + CO2. It functions in the pathway pyrimidine metabolism; UMP biosynthesis via de novo pathway; UMP from orotate: step 2/2. Catalyzes the decarboxylation of orotidine 5'-monophosphate (OMP) to uridine 5'-monophosphate (UMP). This chain is Orotidine 5'-phosphate decarboxylase, found in Vibrio vulnificus (strain CMCP6).